Here is a 124-residue protein sequence, read N- to C-terminus: MRHYEIVFMVHPDQSEQVPGMIERYTGAIKAAGGTIHRLEDWGRRQLAYPIDKLHKAHYVLMNVEAEQSVIDELENNFRFNDAVIRNMIMRTKHAVTEASPMLKAREERPRREDVREEAEEAAE.

Residues 98 to 124 (EASPMLKAREERPRREDVREEAEEAAE) form a disordered region. Residues 104-115 (KAREERPRREDV) show a composition bias toward basic and acidic residues.

The protein belongs to the bacterial ribosomal protein bS6 family.

Functionally, binds together with bS18 to 16S ribosomal RNA. This is Small ribosomal subunit protein bS6 from Tolumonas auensis (strain DSM 9187 / NBRC 110442 / TA 4).